The primary structure comprises 774 residues: 5-methyltetrahydropteroyltriglutamate--homocysteine methyltransferase (774 aa).

5-methyltetrahydropteroyltri-L-glutamate-binding positions include 15-18 and Lys-116; that span reads RELK. L-homocysteine-binding positions include 445–447 and Glu-498; that span reads IGS. Residues 445–447 and Glu-498 each bind L-methionine; that span reads IGS. Residues 529 to 530 and Trp-575 contribute to the 5-methyltetrahydropteroyltri-L-glutamate site; that span reads RC. Position 613 (Asp-613) interacts with L-homocysteine. Asp-613 serves as a coordination point for L-methionine. A 5-methyltetrahydropteroyltri-L-glutamate-binding site is contributed by Glu-619. His-655, Cys-657, and Glu-679 together coordinate Zn(2+). His-708 (proton donor) is an active-site residue. Cys-740 is a Zn(2+) binding site.

The protein belongs to the vitamin-B12 independent methionine synthase family. The cofactor is Zn(2+).

The enzyme catalyses 5-methyltetrahydropteroyltri-L-glutamate + L-homocysteine = tetrahydropteroyltri-L-glutamate + L-methionine. It functions in the pathway amino-acid biosynthesis; L-methionine biosynthesis via de novo pathway; L-methionine from L-homocysteine (MetE route): step 1/1. In terms of biological role, catalyzes the transfer of a methyl group from 5-methyltetrahydrofolate to homocysteine resulting in methionine formation. The polypeptide is 5-methyltetrahydropteroyltriglutamate--homocysteine methyltransferase (Flavobacterium johnsoniae (strain ATCC 17061 / DSM 2064 / JCM 8514 / BCRC 14874 / CCUG 350202 / NBRC 14942 / NCIMB 11054 / UW101) (Cytophaga johnsonae)).